A 216-amino-acid polypeptide reads, in one-letter code: Somatotropin (216 aa).

A signal peptide spans 1–26; the sequence is MAASPRNSVLLAFALLCLPWPQEVGA. Residue histidine 45 participates in Zn(2+) binding. The cysteines at positions 78 and 189 are disulfide-linked. At serine 131 the chain carries Phosphoserine. A Zn(2+)-binding site is contributed by glutamate 198. A disulfide bridge links cysteine 206 with cysteine 214.

The protein belongs to the somatotropin/prolactin family.

The protein localises to the secreted. Plays an important role in growth control. Its major role in stimulating body growth is to stimulate the liver and other tissues to secrete IGF1. It stimulates both the differentiation and proliferation of myoblasts. It also stimulates amino acid uptake and protein synthesis in muscle and other tissues. This is Somatotropin (GH1) from Canis lupus familiaris (Dog).